Here is a 122-residue protein sequence, read N- to C-terminus: UPF0102 protein CPR_1677 (122 aa).

The protein belongs to the UPF0102 family.

The chain is UPF0102 protein CPR_1677 from Clostridium perfringens (strain SM101 / Type A).